The following is a 581-amino-acid chain: Arginine--tRNA ligase (581 aa).

Positions 126 to 136 (PNLAKEMHVGH) match the 'HIGH' region motif.

It belongs to the class-I aminoacyl-tRNA synthetase family. Monomer.

The protein localises to the cytoplasm. The enzyme catalyses tRNA(Arg) + L-arginine + ATP = L-arginyl-tRNA(Arg) + AMP + diphosphate. This Shewanella pealeana (strain ATCC 700345 / ANG-SQ1) protein is Arginine--tRNA ligase.